The sequence spans 91 residues: Phosphocarrier protein NPr (91 aa).

The HPr domain occupies 3 to 90; sequence KLERQVTICN…ALVDAKFDEA (88 aa). His17 functions as the Pros-phosphohistidine intermediate in the catalytic mechanism.

The protein belongs to the HPr family.

It localises to the cytoplasm. Its function is as follows. Component of the phosphoenolpyruvate-dependent nitrogen-metabolic phosphotransferase system (nitrogen-metabolic PTS), that seems to be involved in regulating nitrogen metabolism. The phosphoryl group from phosphoenolpyruvate (PEP) is transferred to the phosphoryl carrier protein NPr by enzyme I-Ntr. Phospho-NPr then transfers it to EIIA-Ntr. Could function in the transcriptional regulation of sigma-54 dependent operons in conjunction with the NPr (PtsO) and EIIA-Ntr (PtsN) proteins. This chain is Phosphocarrier protein NPr (ptsO), found in Shewanella violacea (strain JCM 10179 / CIP 106290 / LMG 19151 / DSS12).